The following is a 143-amino-acid chain: Sirohydrochlorin cobaltochelatase (143 aa).

Residue histidine 9 is the Proton acceptor of the active site. Histidine 9 is a Co(2+) binding site. Ni(2+) is bound at residue histidine 9. Residues glutamate 45 and 70–75 (LAHGVH) contribute to the substrate site. A Co(2+)-binding site is contributed by histidine 75. Histidine 75 contacts Ni(2+).

Belongs to the CbiX family. CbiXS subfamily. Homotetramer; dimer of dimers.

The enzyme catalyses Co-sirohydrochlorin + 2 H(+) = sirohydrochlorin + Co(2+). The catalysed reaction is Ni-sirohydrochlorin + 2 H(+) = sirohydrochlorin + Ni(2+). The protein operates within cofactor biosynthesis; adenosylcobalamin biosynthesis; cob(II)yrinate a,c-diamide from sirohydrochlorin (anaerobic route): step 1/10. Functionally, catalyzes the insertion of Co(2+) into sirohydrochlorin as part of the anaerobic pathway to cobalamin biosynthesis. Involved in the biosynthesis of the unique nickel-containing tetrapyrrole coenzyme F430, the prosthetic group of methyl-coenzyme M reductase (MCR), which plays a key role in methanogenesis and anaerobic methane oxidation. Catalyzes the insertion of Ni(2+) into sirohydrochlorin to yield Ni-sirohydrochlorin. The sequence is that of Sirohydrochlorin cobaltochelatase from Methanopyrus kandleri (strain AV19 / DSM 6324 / JCM 9639 / NBRC 100938).